Here is a 310-residue protein sequence, read N- to C-terminus: Ribosomal protein L11 methyltransferase (310 aa).

The S-adenosyl-L-methionine site is built by T153, G174, D196, and N239.

The protein belongs to the methyltransferase superfamily. PrmA family.

It localises to the cytoplasm. It carries out the reaction L-lysyl-[protein] + 3 S-adenosyl-L-methionine = N(6),N(6),N(6)-trimethyl-L-lysyl-[protein] + 3 S-adenosyl-L-homocysteine + 3 H(+). Methylates ribosomal protein L11. The sequence is that of Ribosomal protein L11 methyltransferase from Janthinobacterium sp. (strain Marseille) (Minibacterium massiliensis).